Reading from the N-terminus, the 1123-residue chain is RNA-binding protein 6 (1123 aa).

2 disordered regions span residues Met1–Leu391 and Leu413–Pro454. The residue at position 17 (Ser17) is a Phosphoserine. A Glycyl lysine isopeptide (Lys-Gly) (interchain with G-Cter in SUMO2) cross-link involves residue Lys36. Residues Asp79–Gly97 are compositionally biased toward basic and acidic residues. Residues Gly98 to Asp114 are compositionally biased toward low complexity. Basic and acidic residues-rich tracts occupy residues Phe115–Pro131 and Tyr145–Gly237. A Phosphoserine modification is found at Ser240. Basic and acidic residues-rich tracts occupy residues Leu245–Pro286 and Gln301–Glu323. Lys331 participates in a covalent cross-link: Glycyl lysine isopeptide (Lys-Gly) (interchain with G-Cter in SUMO2). The segment covering Gly332–Pro354 has biased composition (basic and acidic residues). Phosphothreonine is present on Thr344. Positions Asp356–Gln365 are enriched in polar residues. Ser360 and Ser362 each carry phosphoserine. Basic and acidic residues-rich tracts occupy residues Asp366–Leu391 and Lys431–Pro454. Glycyl lysine isopeptide (Lys-Gly) (interchain with G-Cter in SUMO2) cross-links involve residues Lys386, Lys453, Lys469, and Lys569. The RRM domain maps to Arg456–Ser536. 3 disordered regions span residues Thr574–Glu654, Lys741–Ser787, and Glu827–Lys948. 2 stretches are compositionally biased toward basic and acidic residues: residues Pro597 to Glu654 and Arg742 to His754. Residues Ser772 to Ser787 show a composition bias toward polar residues. Residues Ser843–Val860 show a composition bias toward basic and acidic residues. Glycyl lysine isopeptide (Lys-Gly) (interchain with G-Cter in SUMO2) cross-links involve residues Lys871, Lys879, and Lys887. Phosphoserine is present on Ser891. The span at Gly910 to Gln922 shows a compositional bias: acidic residues. A compositionally biased stretch (basic and acidic residues) spans Gln934–Lys948. Residues Lys935, Lys948, Lys991, and Lys1019 each participate in a glycyl lysine isopeptide (Lys-Gly) (interchain with G-Cter in SUMO2) cross-link. The span at Glu1004–Thr1051 shows a compositional bias: basic and acidic residues. The tract at residues Glu1004–Thr1106 is disordered. Phosphoserine occurs at positions 1022 and 1025. Glycyl lysine isopeptide (Lys-Gly) (interchain with G-Cter in SUMO2) cross-links involve residues Lys1042, Lys1046, and Lys1066. In terms of domain architecture, G-patch spans Thr1051–Arg1097.

May interact with FAM168B. As to expression, ubiquitous in adults.

It is found in the nucleus. Its function is as follows. Specifically binds poly(G) RNA homopolymers in vitro. The polypeptide is RNA-binding protein 6 (RBM6) (Homo sapiens (Human)).